The primary structure comprises 377 residues: E3 ubiquitin-protein ligase rififylin (377 aa).

Residues 55-107 form an FYVE-type zinc finger; that stretch reads TGSEPSCKACGVHFASTTRKQTCLDCKKNFCMTCSSQEGNGPRLCLLCLRFRA. Residues 115–134 form the SAP 1 domain; that stretch reads LMKMKVKDLRDYLSLHDIST. Residues 176–249 are disordered; sequence LTQPQTSTVP…SVDSEDSFVP (74 aa). A compositionally biased stretch (polar residues) spans 190-212; sequence GLPSSPAQVTSVPLAQDQETQQA. Positions 235 to 245 are enriched in acidic residues; it reads EDETQSVDSED. Ser240, Ser243, Ser246, and Ser254 each carry phosphoserine. The 15-residue stretch at 264 to 278 folds into the SAP 2 domain; it reads IEGLTVRQLKEILAR. The RING-type zinc finger occupies 330 to 365; it reads CKICMDSPIDCVLLECGHMVTCTKCGKRMNECPICR.

Interacts with CASP8 and CASP10. Interacts with RIPK1 (via protein kinase domain); involved in RIPK1 ubiquitination. Interacts with PRR5L. Interacts (via RING-type zinc finger) with p53/TP53; involved in p53/TP53 ubiquitination. Interacts (via RING-type zinc finger) with MDM2; the interaction stabilizes MDM2. In terms of processing, autoubiquitinated. Palmitoylated. Post-translationally, undergoes caspase-mediated cleavage upon death-receptor activation, by TNFSF10 for instance. May be mediated by the caspases CASP8 and CASP10 in a negative feedback loop. Ubiquitous. Detected in heart, brain, spleen, lung, liver, skeletal muscle, kidney, testis, thymus, whole embryo and embryonic stem cells.

It is found in the cytoplasm. The protein resides in the cytosol. Its subcellular location is the cell membrane. It localises to the recycling endosome membrane. It carries out the reaction S-ubiquitinyl-[E2 ubiquitin-conjugating enzyme]-L-cysteine + [acceptor protein]-L-lysine = [E2 ubiquitin-conjugating enzyme]-L-cysteine + N(6)-ubiquitinyl-[acceptor protein]-L-lysine.. It functions in the pathway protein modification; protein ubiquitination. Its function is as follows. E3 ubiquitin-protein ligase that regulates several biological processes through the ubiquitin-mediated proteasomal degradation of various target proteins. Mediates 'Lys-48'-linked polyubiquitination of PRR5L and its subsequent proteasomal degradation thereby indirectly regulating cell migration through the mTORC2 complex. Also ubiquitinates the caspases CASP8 and CASP10, promoting their proteasomal degradation, to negatively regulate apoptosis downstream of death domain receptors. Also negatively regulates the tumor necrosis factor-mediated signaling pathway through targeting of RIPK1 to ubiquitin-mediated proteasomal degradation. Negatively regulates p53/TP53 through its direct ubiquitination and targeting to proteasomal degradation. Indirectly, may also negatively regulate p53/TP53 through ubiquitination and degradation of SFN. May also play a role in endocytic recycling. The polypeptide is E3 ubiquitin-protein ligase rififylin (Mus musculus (Mouse)).